Consider the following 451-residue polypeptide: PTS system galactose-specific EIIC component (451 aa).

In terms of domain architecture, PTS EIIC type-3 spans 8–427 (LNKTLMPLAS…VLNVLIYYPF (420 aa)). 11 helical membrane passes run 40–60 (LGIALLTIIGYFPVPAWVDFL), 69–89 (FSAVIGAVTSALAIYVTYNFA), 104–124 (GLLSIASLLMLMPQIITVPVV), 151–171 (TGSTGLIVAIIIGFIVSLVYI), 190–210 (VVDSLSPAIISMVIFCLMFGI), 239–259 (ANPWVLMGIFTFGNFLWFFGI), 263–283 (LIGGILNPLLLTMSYANIDAY), 296–316 (IVFAVGANAWGGSGNTYGLVI), 332–352 (LGAIPSIFNISEPLLFGLPMM), 356–376 (LFFIPLVFQPAILGTVALGLA), and 403–423 (ISGGLPFLIIFAICLVLNVLI).

It is found in the cell membrane. Its function is as follows. The phosphoenolpyruvate-dependent sugar phosphotransferase system (PTS), a major carbohydrate active transport system, catalyzes the phosphorylation of incoming sugar substrates concomitant with their translocation across the cell membrane. Involved in galactose transport with PtcA and PtcB. The polypeptide is PTS system galactose-specific EIIC component (Lactococcus lactis subsp. cremoris (strain MG1363)).